A 375-amino-acid chain; its full sequence is Putative glycyl-radical enzyme activating enzyme MJ0021 (375 aa).

A Radical SAM core domain is found at 23-246 (QCVKGGKLVL…LKVIKEFKGD (224 aa)). Residues Cys-38, Cys-42, and Cys-45 each contribute to the [4Fe-4S] cluster site. Residues 44-46 (YCP) and Gly-87 contribute to the S-adenosyl-L-methionine site.

The protein belongs to the organic radical-activating enzymes family. Requires [4Fe-4S] cluster as cofactor.

The catalysed reaction is glycyl-[protein] + reduced [flavodoxin] + S-adenosyl-L-methionine = glycin-2-yl radical-[protein] + semiquinone [flavodoxin] + 5'-deoxyadenosine + L-methionine + H(+). The protein is Putative glycyl-radical enzyme activating enzyme MJ0021 of Methanocaldococcus jannaschii (strain ATCC 43067 / DSM 2661 / JAL-1 / JCM 10045 / NBRC 100440) (Methanococcus jannaschii).